A 23-amino-acid polypeptide reads, in one-letter code: Cytochrome c oxidase subunit 7A1, mitochondrial (23 aa).

This sequence belongs to the cytochrome c oxidase VIIa family. As to quaternary structure, component of the complex IV (CIV, cytochrome c oxidase), a multisubunit enzyme composed of 14 subunits. The complex is composed of a catalytic core of 3 subunits MT-CO1, MT-CO2 and MT-CO3, encoded in the mitochondrial DNA, and 11 supernumerary subunits COX4I1 (or COX4I2), COX5A, COX5B, COX6A2 (or COX6A1), COX6B1 (or COX6B2), COX6C, COX7A1 (or COX7A2), COX7B, COX7C, COX8B and NDUFA4, which are encoded in the nuclear genome. The complex exists as a monomer or a dimer and forms supercomplexes (SCs) in the inner mitochondrial membrane with NADH-ubiquinone oxidoreductase (complex I, CI) and ubiquinol-cytochrome c oxidoreductase (cytochrome b-c1 complex, complex III, CIII), resulting in different assemblies (supercomplex SCI(1)III(2)IV(1) and megacomplex MCI(2)III(2)IV(2)).

Its subcellular location is the mitochondrion inner membrane. The protein operates within energy metabolism; oxidative phosphorylation. Component of the mitochondrial respiratory complex IV (CIV, also named cytochrome c oxidase complex), the last enzyme in the mitochondrial electron transport chain which drives oxidative phosphorylation. The CIV complex is the component of the respiratory chain that catalyzes the reduction of oxygen to water. Acts as an assembly factor that specifically drives the homodimerization of CIV complexes, mediating the formation of mitochondrial respiratory supercomplexes (respirasomes) containing two CIV: supercomplxes with two molecules of CIV show improved activity. Despite being highly expressed in brown adipose tissue, not required for thermogenesis. The chain is Cytochrome c oxidase subunit 7A1, mitochondrial (COX7A1) from Canis lupus familiaris (Dog).